Here is a 235-residue protein sequence, read N- to C-terminus: Ribonuclease PH (235 aa).

Residues arginine 86 and 124–126 contribute to the phosphate site; that span reads GTR.

This sequence belongs to the RNase PH family. In terms of assembly, homohexameric ring arranged as a trimer of dimers.

It carries out the reaction tRNA(n+1) + phosphate = tRNA(n) + a ribonucleoside 5'-diphosphate. Functionally, phosphorolytic 3'-5' exoribonuclease that plays an important role in tRNA 3'-end maturation. Removes nucleotide residues following the 3'-CCA terminus of tRNAs; can also add nucleotides to the ends of RNA molecules by using nucleoside diphosphates as substrates, but this may not be physiologically important. Probably plays a role in initiation of 16S rRNA degradation (leading to ribosome degradation) during starvation. The polypeptide is Ribonuclease PH (Legionella pneumophila (strain Corby)).